A 173-amino-acid chain; its full sequence is Peptide deformylase (173 aa).

The Fe cation site is built by C94 and H136. Residue E137 is part of the active site. H140 is a binding site for Fe cation.

The protein belongs to the polypeptide deformylase family. Fe(2+) serves as cofactor.

The enzyme catalyses N-terminal N-formyl-L-methionyl-[peptide] + H2O = N-terminal L-methionyl-[peptide] + formate. Removes the formyl group from the N-terminal Met of newly synthesized proteins. Requires at least a dipeptide for an efficient rate of reaction. N-terminal L-methionine is a prerequisite for activity but the enzyme has broad specificity at other positions. In Desulfosudis oleivorans (strain DSM 6200 / JCM 39069 / Hxd3) (Desulfococcus oleovorans), this protein is Peptide deformylase.